We begin with the raw amino-acid sequence, 260 residues long: Tropinone reductase homolog At1g07450 (260 aa).

14-38 is a binding site for NADP(+); that stretch reads LVTGGSKGIGYAIVEELVGFGARVH. Serine 147 lines the substrate pocket. The active-site Proton acceptor is the tyrosine 159.

It belongs to the short-chain dehydrogenases/reductases (SDR) family. SDR65C subfamily.

The protein is Tropinone reductase homolog At1g07450 of Arabidopsis thaliana (Mouse-ear cress).